The primary structure comprises 403 residues: Prostaglandin D2 receptor 2 (403 aa).

Topologically, residues 1–34 (MANITLKPLCPLLEEMVQLPNHSNSSLRYIDHVS) are extracellular. N-linked (GlcNAc...) asparagine glycans are attached at residues Asn3, Asn21, and Asn24. The helical transmembrane segment at 35-55 (VLLHGLASLLGLVENGLILFV) threads the bilayer. At 56–71 (VGCRMRQTVVTTWVLH) the chain is on the cytoplasmic side. A helical membrane pass occupies residues 72 to 92 (LALSDLLAAASLPFFTYFLAV). The Extracellular portion of the chain corresponds to 93–104 (GHSWELGTTFCK). A disulfide bond links Cys103 and Cys198. A helical transmembrane segment spans residues 105–125 (LHSSVFFLNMFASGFLLSAIS). Residues 126–147 (LDRCLQVVRPVWAQNHRTVAAA) are Cytoplasmic-facing. Residues 148–168 (HRVCLMLWALAVLNTVPYFVF) form a helical membrane-spanning segment. Over 169-209 (RDTIPRRDGRIMCYYNMLLLNPGSDRDTTCDYRQKALAVSK) the chain is Extracellular. A helical membrane pass occupies residues 210-230 (FLLAFMVPLAIIASSHVAVSL). Residues 231-245 (QLHHRGRQRTGRFVR) are Cytoplasmic-facing. The helical transmembrane segment at 246 to 266 (LVAAIVVAFILCWGPYHIFSL) threads the bilayer. Topologically, residues 267–284 (LEARAHSVTTLRQLASRG) are extracellular. A helical transmembrane segment spans residues 285–305 (LPFVTSLAFFNSVVNPLLYVL). At 306–403 (TCPDMLHKLR…KQGSLSCTLD (98 aa)) the chain is on the cytoplasmic side. An Involved in the recycling of CRTH2 motif is present at residues 329–332 (DSDL). Ser330 bears the Phosphoserine mark. Disordered stretches follow at residues 332–353 (LSTG…STTT) and 384–403 (PRRV…CTLD). Residues 338–348 (KRCRRRHRRRA) show a composition bias toward basic residues. Ser349 carries the phosphoserine modification. Residues 393-403 (EKQGSLSCTLD) show a composition bias toward polar residues.

This sequence belongs to the G-protein coupled receptor 1 family. In terms of processing, phosphorylated.

The protein localises to the cell membrane. In terms of biological role, receptor for prostaglandin D2 (PGD2). Coupled to the G(i)-protein. Receptor activation may result in pertussis toxin-sensitive decreases in cAMP levels and Ca(2+) mobilization. PI3K signaling is also implicated in mediating PTGDR2 effects. PGD2 induced receptor internalization. CRTH2 internalization can be regulated by diverse kinases such as, PKC, PKA, GRK2, GPRK5/GRK5 and GRK6. Receptor activation is responsible, at least in part, in immune regulation and allergic/inflammation responses. The polypeptide is Prostaglandin D2 receptor 2 (Ptgdr2) (Rattus norvegicus (Rat)).